A 118-amino-acid polypeptide reads, in one-letter code: Non-specific lipid-transfer protein 1 (118 aa).

The first 25 residues, 1 to 25, serve as a signal peptide directing secretion; that stretch reads MAGVMKLACLLLACMIVAGPITSNA. 4 cysteine pairs are disulfide-bonded: Cys-29-Cys-76, Cys-39-Cys-53, Cys-54-Cys-100, and Cys-74-Cys-114.

The protein belongs to the plant LTP family. Expressed primarily in epidermal cells.

It localises to the secreted. It is found in the cell wall. In terms of biological role, plant non-specific lipid-transfer proteins transfer phospholipids as well as galactolipids across membranes. May play a role in wax or cutin deposition in the cell walls of expanding epidermal cells and certain secretory tissues. The chain is Non-specific lipid-transfer protein 1 (LTP1) from Arabidopsis thaliana (Mouse-ear cress).